A 478-amino-acid chain; its full sequence is tRNA(Ile)-lysidine synthase (478 aa).

Residue 27–32 coordinates ATP; sequence SGGSDS.

The protein belongs to the tRNA(Ile)-lysidine synthase family.

It is found in the cytoplasm. It catalyses the reaction cytidine(34) in tRNA(Ile2) + L-lysine + ATP = lysidine(34) in tRNA(Ile2) + AMP + diphosphate + H(+). Its function is as follows. Ligates lysine onto the cytidine present at position 34 of the AUA codon-specific tRNA(Ile) that contains the anticodon CAU, in an ATP-dependent manner. Cytidine is converted to lysidine, thus changing the amino acid specificity of the tRNA from methionine to isoleucine. In Rickettsia conorii (strain ATCC VR-613 / Malish 7), this protein is tRNA(Ile)-lysidine synthase.